A 746-amino-acid chain; its full sequence is WD repeat-containing and planar cell polarity effector protein fritz homolog (746 aa).

2 WD repeats span residues 326–374 (IQCV…TLLA) and 375–414 (QTEL…INIQ).

This sequence belongs to the WD repeat fritz family. In terms of assembly, component of the CPLANE (ciliogenesis and planar polarity effectors) complex, composed of INTU, FUZ and WDPCP. Interacts with CPLANE1.

The protein resides in the cell membrane. It is found in the cytoplasm. The protein localises to the cytoskeleton. It localises to the cilium axoneme. Its subcellular location is the cilium basal body. Functionally, probable effector of the planar cell polarity signaling pathway which regulates the septin cytoskeleton in both ciliogenesis and collective cell movements. Together with FUZ and WDPCP proposed to function as core component of the CPLANE (ciliogenesis and planar polarity effectors) complex involved in the recruitment of peripheral IFT-A proteins to basal bodies. Binds phosphatidylinositol 3-phosphate with highest affinity, followed by phosphatidylinositol 4-phosphate and phosphatidylinositol 5-phosphate. The sequence is that of WD repeat-containing and planar cell polarity effector protein fritz homolog (WDPCP) from Homo sapiens (Human).